The chain runs to 194 residues: Probable GTP-binding protein EngB (194 aa).

The 173-residue stretch at 22–194 (DLPEFALAGR…KFWDWIEDKM (173 aa)) folds into the EngB-type G domain. GTP is bound by residues 30–37 (GRSNVGKS), 57–61 (GKTQT), 75–78 (DVPG), 142–145 (TKMD), and 175–177 (FSS). Positions 37 and 59 each coordinate Mg(2+).

Belongs to the TRAFAC class TrmE-Era-EngA-EngB-Septin-like GTPase superfamily. EngB GTPase family. It depends on Mg(2+) as a cofactor.

Necessary for normal cell division and for the maintenance of normal septation. The chain is Probable GTP-binding protein EngB from Lactobacillus gasseri (strain ATCC 33323 / DSM 20243 / BCRC 14619 / CIP 102991 / JCM 1131 / KCTC 3163 / NCIMB 11718 / NCTC 13722 / AM63).